The primary structure comprises 26 residues: Thrombin-like enzyme LmrSP-3 (26 aa).

The protein belongs to the peptidase S1 family. Snake venom subfamily. In terms of tissue distribution, expressed by the venom gland.

Its subcellular location is the secreted. In terms of biological role, thrombin-like snake venom serine protease that cleaves alpha-chain of fibrinogen (FGA) releases only fibrinopeptide A. Shows coagulant, esterase and amidase activities. The chain is Thrombin-like enzyme LmrSP-3 from Lachesis muta rhombeata (Bushmaster).